The sequence spans 305 residues: Putative lipid kinase SAR0780 (305 aa).

Residues 3 to 139 form the DAGKc domain; sequence NKYTHGVLFY…YDVIKINNQY (137 aa). ATP contacts are provided by residues Ser-44, 74–80, and Thr-101; that span reads GDGTVNE. Mg(2+) contacts are provided by Ser-220, Asp-223, and Glu-225. Glu-281 acts as the Proton acceptor in catalysis.

It belongs to the diacylglycerol/lipid kinase family. It depends on Mg(2+) as a cofactor.

Functionally, may catalyze the ATP-dependent phosphorylation of lipids other than diacylglycerol (DAG). In fact, is not able to exhibit diacylglycerol kinase activity in vitro. This chain is Putative lipid kinase SAR0780, found in Staphylococcus aureus (strain MRSA252).